Reading from the N-terminus, the 216-residue chain is UPF0193 protein EVG1 homolog (216 aa).

The protein belongs to the UPF0193 (EVG1) family.

The chain is UPF0193 protein EVG1 homolog from Mus musculus (Mouse).